Reading from the N-terminus, the 622-residue chain is Low affinity potassium transport system protein Kup (622 aa).

12 helical membrane passes run 9–29 (LPAV…TSPL), 49–69 (VFGF…LKYL), 101–121 (VLVI…VITP), 137–157 (PAMD…LFII), 165–185 (VGKL…VLGV), 212–232 (AVSF…EALY), 247–267 (WFTV…ALLL), 276–296 (PFFL…ATLA), 337–357 (IYIP…IVSF), 363–383 (LAAA…ILFC), 397–417 (AWVL…ANVV), and 419–439 (ILSG…IMTT).

This sequence belongs to the HAK/KUP transporter (TC 2.A.72) family.

The protein resides in the cell inner membrane. The enzyme catalyses K(+)(in) + H(+)(in) = K(+)(out) + H(+)(out). Responsible for the low-affinity transport of potassium into the cell. Likely operates as a K(+):H(+) symporter. In Pectobacterium atrosepticum (strain SCRI 1043 / ATCC BAA-672) (Erwinia carotovora subsp. atroseptica), this protein is Low affinity potassium transport system protein Kup.